Here is a 451-residue protein sequence, read N- to C-terminus: NADH-quinone oxidoreductase subunit D (451 aa).

It belongs to the complex I 49 kDa subunit family. As to quaternary structure, NDH-1 is composed of 14 different subunits. Subunits NuoB, C, D, E, F, and G constitute the peripheral sector of the complex.

It is found in the cell membrane. It catalyses the reaction a quinone + NADH + 5 H(+)(in) = a quinol + NAD(+) + 4 H(+)(out). Functionally, NDH-1 shuttles electrons from NADH, via FMN and iron-sulfur (Fe-S) centers, to quinones in the respiratory chain. The immediate electron acceptor for the enzyme in this species is believed to be a menaquinone. Couples the redox reaction to proton translocation (for every two electrons transferred, four hydrogen ions are translocated across the cytoplasmic membrane), and thus conserves the redox energy in a proton gradient. This chain is NADH-quinone oxidoreductase subunit D, found in Mycolicibacterium gilvum (strain PYR-GCK) (Mycobacterium gilvum (strain PYR-GCK)).